Reading from the N-terminus, the 212-residue chain is Probable transaldolase (212 aa).

Lys-84 acts as the Schiff-base intermediate with substrate in catalysis.

It belongs to the transaldolase family. Type 3B subfamily.

The protein resides in the cytoplasm. The catalysed reaction is D-sedoheptulose 7-phosphate + D-glyceraldehyde 3-phosphate = D-erythrose 4-phosphate + beta-D-fructose 6-phosphate. It functions in the pathway carbohydrate degradation; pentose phosphate pathway; D-glyceraldehyde 3-phosphate and beta-D-fructose 6-phosphate from D-ribose 5-phosphate and D-xylulose 5-phosphate (non-oxidative stage): step 2/3. Functionally, transaldolase is important for the balance of metabolites in the pentose-phosphate pathway. The polypeptide is Probable transaldolase (Bacillus velezensis (strain DSM 23117 / BGSC 10A6 / LMG 26770 / FZB42) (Bacillus amyloliquefaciens subsp. plantarum)).